Consider the following 639-residue polypeptide: MNQVFFSKIRSLVSADRHRFKSKEMDLDLDLSYITDNILAMGFPGTGLEASWRNSIDDVCELLKQKHHGKYMIWNLSERVYDYSKLNNQILEFPFLDHHPPPLSLLFEIVNSLSNWLKADAENVAVVHCKGGKGRTGTIICCYLYYSCQFEIMDDAKNHFAEKRSKMKKGVTQPSQQRYINYFKEIVSGSHMVEEFVLTFRSIELGPLTKDQANSLSFEIFEHAKEPILNFASSSNSIQIVPINNDNSESNNNNNNNNNNNNNNNNQQQQLYKIIILIQKKVQNDVLIRVYRGDTGKGKGKMKKQIFHLIFNIAFVNLDQCLFGMNEFDHFKSSKKYDPNLQMECRFQNNCTGAPDHSFKIWNIMALQYQRTKSSLNNSITDIKSINEINSTNNNNILASSAPTPLTTTTTTTTTTTTTSLPSSEHSTPQILISSSDANLDLKNCNINCDSSSGGGSNSSRNSNSNSRGGSSNSSSNRSSTSSRSSITTDSIKPSCSSDSICNNSSICNNSCNNNNNNNNNNNNNNNNNNNNNNNNNNNKNSNNNNNESSSNSNDDSDSEASIRKRKNTLWSSGSSIKLKPSPNLSRLSLFNGHRQSFTKKINPNNNEENVDQKTLPILKKETNDPSESDIKNVEIIQD.

A Phosphatase tensin-type domain is found at 20–190 (FKSKEMDLDL…NYFKEIVSGS (171 aa)). C129 acts as the Phosphocysteine intermediate in catalysis. Residues 195 to 350 (EFVLTFRSIE…LQMECRFQNN (156 aa)) enclose the C2 tensin-type domain. 5 disordered regions span residues 243–265 (INNDNSESNNNNNNNNNNNNNNN), 395–429 (NNILASSAPTPLTTTTTTTTTTTTTSLPSSEHSTP), 451–498 (SSSG…SCSS), 519–567 (NNNN…RKRK), and 598–628 (FTKKINPNNNEENVDQKTLPILKKETNDPSE). Composition is skewed to low complexity over residues 244–265 (NNDNSESNNNNNNNNNNNNNNN), 395–424 (NNILASSAPTPLTTTTTTTTTTTTTSLPSS), 458–486 (NSSRNSNSNSRGGSSNSSSNRSSTSSRSS), and 519–554 (NNNNNNNNNNNNNNNNNNNNNKNSNNNNNESSSNSN). The segment covering 598–608 (FTKKINPNNNE) has biased composition (polar residues). The span at 619–628 (LKKETNDPSE) shows a compositional bias: basic and acidic residues.

The cofactor is Mg(2+).

The catalysed reaction is a 1,2-diacyl-sn-glycero-3-phospho-(1D-myo-inositol-3,4,5-trisphosphate) + H2O = a 1,2-diacyl-sn-glycero-3-phospho-(1D-myo-inositol-4,5-bisphosphate) + phosphate. Its function is as follows. Protein phosphatase that negatively regulates PI3K-dependent pathways. Regulates cAMP signal transduction to control territory size. During development, a lawn of Dictyostelium cells breaks up into territories where cells aggregate in dendritic streams to form groups of 20'000 cells. In Dictyostelium discoideum (Social amoeba), this protein is Phosphatidylinositol 3,4,5-trisphosphate 3-phosphatase cnrN (cnrN).